We begin with the raw amino-acid sequence, 448 residues long: Phosphoglucosamine mutase (448 aa).

Ser-100 functions as the Phosphoserine intermediate in the catalytic mechanism. Mg(2+) is bound by residues Ser-100, Asp-240, Asp-242, and Asp-244. A Phosphoserine modification is found at Ser-100.

The protein belongs to the phosphohexose mutase family. Mg(2+) is required as a cofactor. Activated by phosphorylation.

The enzyme catalyses alpha-D-glucosamine 1-phosphate = D-glucosamine 6-phosphate. Its function is as follows. Catalyzes the conversion of glucosamine-6-phosphate to glucosamine-1-phosphate. The sequence is that of Phosphoglucosamine mutase from Bacillus cereus (strain ATCC 10987 / NRS 248).